The chain runs to 325 residues: Lipoyl synthase (325 aa).

7 residues coordinate [4Fe-4S] cluster: cysteine 71, cysteine 76, cysteine 82, cysteine 97, cysteine 101, cysteine 104, and serine 311. The 218-residue stretch at 83–300 folds into the Radical SAM core domain; it reads FSGGTATFMI…ERQALAMGFT (218 aa).

The protein belongs to the radical SAM superfamily. Lipoyl synthase family. The cofactor is [4Fe-4S] cluster.

Its subcellular location is the cytoplasm. It carries out the reaction [[Fe-S] cluster scaffold protein carrying a second [4Fe-4S](2+) cluster] + N(6)-octanoyl-L-lysyl-[protein] + 2 oxidized [2Fe-2S]-[ferredoxin] + 2 S-adenosyl-L-methionine + 4 H(+) = [[Fe-S] cluster scaffold protein] + N(6)-[(R)-dihydrolipoyl]-L-lysyl-[protein] + 4 Fe(3+) + 2 hydrogen sulfide + 2 5'-deoxyadenosine + 2 L-methionine + 2 reduced [2Fe-2S]-[ferredoxin]. It participates in protein modification; protein lipoylation via endogenous pathway; protein N(6)-(lipoyl)lysine from octanoyl-[acyl-carrier-protein]: step 2/2. Functionally, catalyzes the radical-mediated insertion of two sulfur atoms into the C-6 and C-8 positions of the octanoyl moiety bound to the lipoyl domains of lipoate-dependent enzymes, thereby converting the octanoylated domains into lipoylated derivatives. This is Lipoyl synthase from Methylobacillus flagellatus (strain ATCC 51484 / DSM 6875 / VKM B-1610 / KT).